Consider the following 546-residue polypeptide: Glutathione reductase (546 aa).

Residues 2-46 (YKHRYFHFFFFFFFFLVSTKIIRSFTFLNNNTNLSNPVYFKKKAN) constitute an apicoplast transit peptide. The FAD site is built by Ser-58 and Gly-59. Ser-58 contributes to the glutathione binding site. Arg-65 is a glutathione binding site. The FAD site is built by Glu-78, Thr-85, Cys-86, and Lys-94. Cys-86 and Cys-91 are disulfide-bonded. Tyr-141 lines the glutathione pocket. Ala-157 serves as a coordination point for FAD. NADP(+) is bound by residues Ile-233, Glu-236, Arg-253, Arg-259, and Gly-318. Residues Asp-358 and Thr-400 each contribute to the FAD site. Arg-408 is a glutathione binding site. Val-430 serves as a coordination point for NADP(+). Residue His-531 coordinates FAD. His-531 functions as the Proton acceptor in the catalytic mechanism.

The protein belongs to the class-I pyridine nucleotide-disulfide oxidoreductase family. As to quaternary structure, homodimer. Requires FAD as cofactor.

The protein localises to the cytoplasm. The protein resides in the plastid. Its subcellular location is the apicoplast. The catalysed reaction is 2 glutathione + NADP(+) = glutathione disulfide + NADPH + H(+). In terms of biological role, catalyzes the reduction of glutathione disulfide (GSSG) to reduced glutathione (GSH). Constitutes the major mechanism to maintain a high GSH:GSSG ratio in the cytosol. This chain is Glutathione reductase, found in Plasmodium falciparum (isolate 3D7).